The chain runs to 377 residues: P2Y purinoceptor 2 (377 aa).

At 1-32 the chain is on the extracellular side; the sequence is MAADLGPWNDTINGTWDGDELGYRCRFNEDFK. N-linked (GlcNAc...) asparagine glycans are attached at residues N9 and N13. The chain crosses the membrane as a helical span at residues 33–59; the sequence is YVLLPVSYGVVCVPGLCLNAVALYIFL. At 60–70 the chain is on the cytoplasmic side; that stretch reads CRLKTWNASTT. Residues 71–93 form a helical membrane-spanning segment; sequence YMFHLAVSDALYAASLPLLVYYY. Residues 94 to 110 are Extracellular-facing; that stretch reads ARGDHWPFSTVLCKLVR. A disulfide bridge links C106 with C183. The helical transmembrane segment at 111 to 129 threads the bilayer; sequence FLFYTNLYCSILFLTCISV. Topologically, residues 130 to 152 are cytoplasmic; that stretch reads HRCLGVLRPLRSLRWGRARYARR. Residues 153 to 172 traverse the membrane as a helical segment; that stretch reads VAGAVWVLVLACQAPVLYFV. Residues 173–194 lie on the Extracellular side of the membrane; the sequence is TTSARGGRVTCHDTSAPELFSR. A helical transmembrane segment spans residues 195–220; the sequence is FVAYSSVMLGLLFAVPFAVILVCYVL. The Cytoplasmic segment spans residues 221-246; it reads MARRLLKPAYGTSGGLPRAKRKSVRT. Residues 247–269 traverse the membrane as a helical segment; the sequence is IAVVLAVFALCFLPFHVTRTLYY. The Extracellular portion of the chain corresponds to 270-287; sequence SFRSLDLSCHTLNAINMA. A helical transmembrane segment spans residues 288-309; the sequence is YKVTRPLASANSCLDPVLYFLA. Residues 310–377 lie on the Cytoplasmic side of the membrane; it reads GQRLVRFARD…GSENTKDIRL (68 aa). A disordered region spans residues 318 to 377; sequence RDAKPPTGPSPATPARRRLGLRRSDRTDMQRIEDVLGSSEDSRRTESTPAGSENTKDIRL. Basic and acidic residues predominate over residues 339-363; that stretch reads RRSDRTDMQRIEDVLGSSEDSRRTE.

It belongs to the G-protein coupled receptor 1 family. As to expression, spleen, testis, kidney, liver, lung, heart and brain.

Its subcellular location is the cell membrane. In terms of biological role, receptor for ATP and UTP coupled to G-proteins that activate a phosphatidylinositol-calcium second messenger system. The affinity range is UTP = ATP &gt; ATP-gamma-S &gt;&gt; 2-methylthio-ATP = ADP. The chain is P2Y purinoceptor 2 (P2RY2) from Homo sapiens (Human).